A 318-amino-acid polypeptide reads, in one-letter code: uncharacterized protein (318 aa).

This is an uncharacterized protein from Schizosaccharomyces pombe (strain 972 / ATCC 24843) (Fission yeast).